The primary structure comprises 251 residues: Ubiquinone/menaquinone biosynthesis C-methyltransferase UbiE (251 aa).

Residues threonine 74, aspartate 95, 123–124, and serine 140 contribute to the S-adenosyl-L-methionine site; that span reads NA.

It belongs to the class I-like SAM-binding methyltransferase superfamily. MenG/UbiE family.

It carries out the reaction a 2-demethylmenaquinol + S-adenosyl-L-methionine = a menaquinol + S-adenosyl-L-homocysteine + H(+). It catalyses the reaction a 2-methoxy-6-(all-trans-polyprenyl)benzene-1,4-diol + S-adenosyl-L-methionine = a 5-methoxy-2-methyl-3-(all-trans-polyprenyl)benzene-1,4-diol + S-adenosyl-L-homocysteine + H(+). It participates in quinol/quinone metabolism; menaquinone biosynthesis; menaquinol from 1,4-dihydroxy-2-naphthoate: step 2/2. It functions in the pathway cofactor biosynthesis; ubiquinone biosynthesis. Functionally, methyltransferase required for the conversion of demethylmenaquinol (DMKH2) to menaquinol (MKH2) and the conversion of 2-polyprenyl-6-methoxy-1,4-benzoquinol (DDMQH2) to 2-polyprenyl-3-methyl-6-methoxy-1,4-benzoquinol (DMQH2). This chain is Ubiquinone/menaquinone biosynthesis C-methyltransferase UbiE, found in Klebsiella pneumoniae (strain 342).